Here is a 426-residue protein sequence, read N- to C-terminus: Histidine--tRNA ligase (426 aa).

The protein belongs to the class-II aminoacyl-tRNA synthetase family. As to quaternary structure, homodimer.

Its subcellular location is the cytoplasm. The catalysed reaction is tRNA(His) + L-histidine + ATP = L-histidyl-tRNA(His) + AMP + diphosphate + H(+). The chain is Histidine--tRNA ligase from Legionella pneumophila subsp. pneumophila (strain Philadelphia 1 / ATCC 33152 / DSM 7513).